Consider the following 420-residue polypeptide: MAPRSSRGIAPAMLCGLSLFLGFPGLVWVQISVPPQSSPHTEPHPCHTCRGLVDSFNKGLERTIRDNFGGGNTAWEEEKLSKYKDSETRLVEVLEGVCSKSDFECHRLLELSEELVESWWFHKQQEAPDLFQWLCSDSLKLCCPSGTFGPSCLPCPGGAERPCGGYGHCEGEGTRGGSGHCDCQAGYGGEACGQCGLGYFEAERNASHLVCSACFGPCARCSGPEESHCLQCKKGWALHHLKCVDIDECGTERASCGADQFCVNTEGSYECRDCAKACLGCMGAGPGRCKKCSPGYQQVGSKCLDVDECETAVCPGENQQCENTEGSYRCICADGYKQMEGICVKDQIPESAGFFSEMTEDELVVLQQMFFGVIICALATLAAKGDLVFTAIFIGAVAAMTGYWLSERSDRVLEGFIKGR.

Positions 1–29 (MAPRSSRGIAPAMLCGLSLFLGFPGLVWV) are cleaved as a signal peptide. Over 30 to 362 (QISVPPQSSP…GFFSEMTEDE (333 aa)) the chain is Extracellular. The short motif at 46-49 (CHTC) is the CXXC element. Cystine bridges form between Cys-46/Cys-49, Cys-155/Cys-169, Cys-163/Cys-181, and Cys-183/Cys-192. The EGF-like 1 domain maps to 153–193 (LPCPGGAERPCGGYGHCEGEGTRGGSGHCDCQAGYGGEACG). An N-linked (GlcNAc...) asparagine glycan is attached at Asn-205. 2 FU repeats span residues 208–255 (HLVC…ERAS) and 268–315 (SYEC…AVCP). The short motif at 278–281 (CLGC) is the CXXC element. 4 disulfide bridges follow: Cys-278–Cys-281, Cys-309–Cys-321, Cys-314–Cys-330, and Cys-332–Cys-343. The EGF-like 2; calcium-binding domain maps to 305-344 (DVDECETAVCPGENQQCENTEGSYRCICADGYKQMEGICV). The chain crosses the membrane as a helical span at residues 363–383 (LVVLQQMFFGVIICALATLAA). Residue Lys-384 is a topological domain, cytoplasmic. A helical transmembrane segment spans residues 385-405 (GDLVFTAIFIGAVAAMTGYWL). Topologically, residues 406 to 420 (SERSDRVLEGFIKGR) are extracellular.

This sequence belongs to the CRELD family.

It localises to the membrane. The catalysed reaction is Catalyzes the rearrangement of -S-S- bonds in proteins.. Its function is as follows. Protein disulfide isomerase. Promotes the localization of acetylcholine receptors (AChRs) to the plasma membrane. The protein is Protein disulfide isomerase CRELD1 (CRELD1) of Bos taurus (Bovine).